Here is a 113-residue protein sequence, read N- to C-terminus: Propane 2-monooxygenase, effector component (113 aa).

Belongs to the TmoD/XamoD family. The propane 2-monooxygenase multicomponent enzyme system is composed of an electron transfer component and a monooxygenase component interacting with the effector protein PrmD. The electron transfer component is composed of a reductase (PrmB), and the monooxygenase component is formed by a large subunit (PrmA) and a small subunit (PrmC).

In terms of biological role, effector component of the propane 2-monooxygenase multicomponent enzyme system which is involved in the degradation of propane via the O2-dependent hydroxylation of propane. The chain is Propane 2-monooxygenase, effector component from Rhodococcus jostii (strain RHA1).